The sequence spans 579 residues: PCNA-interacting partner (579 aa).

The disordered stretch occupies residues 480-543 (TSFGNVHLDR…AKIPKKSNDS (64 aa)). Positions 486–496 (HLDRSKNEKVS) are enriched in basic and acidic residues.

It belongs to the PARI family. Interacts with RAD51 and PCNA. Interacts with PARP1. Interacts with TASOR. In terms of tissue distribution, restricted to testis. Overexpressed in multiple cancer cells.

Its subcellular location is the cytoplasm. It is found in the nucleus. Functionally, required to suppress inappropriate homologous recombination, thereby playing a central role DNA repair and in the maintenance of genomic stability. Antagonizes homologous recombination by interfering with the formation of the RAD51-DNA homologous recombination structure. Binds single-strand DNA and poly(A) homopolymers. Positively regulate the poly(ADP-ribosyl)ation activity of PARP1; however such function may be indirect. This is PCNA-interacting partner (PARPBP) from Homo sapiens (Human).